Here is a 447-residue protein sequence, read N- to C-terminus: Cytochrome P450 BJ-4 homolog (447 aa).

A heme-binding site is contributed by Cys-392.

The protein belongs to the cytochrome P450 family. Heme is required as a cofactor.

Cytochromes P450 are a group of heme-thiolate monooxygenases. They oxidize a variety of structurally unrelated compounds, including steroids, fatty acids, and xenobiotics. This Sinorhizobium fredii (strain NBRC 101917 / NGR234) protein is Cytochrome P450 BJ-4 homolog (cyp117A2).